We begin with the raw amino-acid sequence, 116 residues long: U30-theraphotoxin-Cg1b (116 aa).

A signal peptide spans 1-17 (MKLCVLTIATLLVTATS). The propeptide occupies 18-53 (LETQKEIAEGNELTREETPSLVEHKEDEAAAASEKR). The tract at residues 25-45 (AEGNELTREETPSLVEHKEDE) is disordered. Disulfide bonds link Cys-55–Cys-69, Cys-62–Cys-75, Cys-66–Cys-112, and Cys-68–Cys-88.

The protein belongs to the neurotoxin 03 (Tx2) family. 02 subfamily. As to expression, expressed by the venom gland.

The protein localises to the secreted. Probable ion channel inhibitor. In Chilobrachys guangxiensis (Chinese earth tiger tarantula), this protein is U30-theraphotoxin-Cg1b.